The primary structure comprises 2049 residues: Kinetochore-associated protein rod-1 (2049 aa).

As to quaternary structure, component of the RZZ complex composed of rod-1, czw-1 and zwl-1. Interacts (via N-terminus) with NDC80 complex component ndc-80.

The protein resides in the chromosome. It is found in the centromere. Its subcellular location is the kinetochore. It localises to the cytoplasm. The protein localises to the cytoskeleton. The protein resides in the spindle. Its function is as follows. Essential component of the mitotic checkpoint, which prevents cells from prematurely exiting mitosis. Required for chromosome segregation, the assembly of the dynein-dynactin and mdf-1-mdf-2 complexes onto kinetochores and spindle pole separation. Plays a role in nuclear envelope breakdown. Its function related to the spindle assembly machinery and kinetochore-microtubule attachments likely depends on its association in the mitotic RZZ complex. The RZZ complex recruits the spindly-like protein spdl-1 to kinetochores. To prevent irregular chromosome segregation, the complex also inhibits the attachment of the kinetochore-associated NDC80 complex to microtubules. The recruitment of spdl-1 to kinetochores relieves this inhibition. Required for embryonic development. The sequence is that of Kinetochore-associated protein rod-1 from Caenorhabditis elegans.